The chain runs to 876 residues: Leucine--tRNA ligase (876 aa).

The 'HIGH' region motif lies at 42–52 (PYPSGKLHMGH). Residues 634–638 (KMSKS) carry the 'KMSKS' region motif. Residue Lys-637 participates in ATP binding.

The protein belongs to the class-I aminoacyl-tRNA synthetase family.

It localises to the cytoplasm. The catalysed reaction is tRNA(Leu) + L-leucine + ATP = L-leucyl-tRNA(Leu) + AMP + diphosphate. The polypeptide is Leucine--tRNA ligase (Neisseria gonorrhoeae (strain ATCC 700825 / FA 1090)).